A 432-amino-acid chain; its full sequence is Histidine--tRNA ligase (432 aa).

Belongs to the class-II aminoacyl-tRNA synthetase family.

The protein localises to the cytoplasm. The enzyme catalyses tRNA(His) + L-histidine + ATP = L-histidyl-tRNA(His) + AMP + diphosphate + H(+). This is Histidine--tRNA ligase from Pyrococcus furiosus (strain ATCC 43587 / DSM 3638 / JCM 8422 / Vc1).